The sequence spans 255 residues: 5-oxoprolinase subunit A (255 aa).

This sequence belongs to the LamB/PxpA family. Forms a complex composed of PxpA, PxpB and PxpC.

It catalyses the reaction 5-oxo-L-proline + ATP + 2 H2O = L-glutamate + ADP + phosphate + H(+). Its function is as follows. Catalyzes the cleavage of 5-oxoproline to form L-glutamate coupled to the hydrolysis of ATP to ADP and inorganic phosphate. The protein is 5-oxoprolinase subunit A of Thermococcus onnurineus (strain NA1).